A 303-amino-acid polypeptide reads, in one-letter code: Leukocyte immunoglobulin-like receptor subfamily B member 4B (303 aa).

Residues 1–23 form the signal peptide; it reads MIAMLTVLLYLALILEPRTAVQA. At 24-238 the chain is on the extracellular side; that stretch reads GHLPKPIIWA…TEDGLETYQK (215 aa). Ig-like C2-type domains lie at 42–123 and 124–212; these read YTSV…AYEN and PSLS…KPSN. Cys49 and Cys98 form a disulfide bridge. 3 N-linked (GlcNAc...) asparagine glycosylation sites follow: Asn79, Asn133, and Asn191. Cys144 and Cys196 are disulfide-bonded. A helical transmembrane segment spans residues 239–260; the sequence is ILIGVLVSFLLLFFLLLFLILI. Over 261–303 the chain is Cytoplasmic; the sequence is GYQCRHKNKANASVKNTQSEDNAELNSWNPQNEDPPRELCTPR. Over residues 275-292 the composition is skewed to polar residues; sequence KNTQSEDNAELNSWNPQN. Residues 275-303 are disordered; that stretch reads KNTQSEDNAELNSWNPQNEDPPRELCTPR.

As to quaternary structure, monomer and homodimer. Expressed on mast cells (at protein level). Also expressed at much lower levels on natural killer cells (at protein level).

The protein resides in the cell membrane. Its function is as follows. Plays a role in mast cell activation. In Mus musculus (Mouse), this protein is Leukocyte immunoglobulin-like receptor subfamily B member 4B.